Reading from the N-terminus, the 617-residue chain is Dihydroxy-acid dehydratase (617 aa).

Residue Asp81 coordinates Mg(2+). Cys122 is a [2Fe-2S] cluster binding site. Residues Asp123 and Lys124 each coordinate Mg(2+). An N6-carboxylysine modification is found at Lys124. A [2Fe-2S] cluster-binding site is contributed by Cys195. Mg(2+) is bound at residue Glu491. The Proton acceptor role is filled by Ser517.

This sequence belongs to the IlvD/Edd family. As to quaternary structure, homodimer. The cofactor is [2Fe-2S] cluster. Mg(2+) is required as a cofactor.

It carries out the reaction (2R)-2,3-dihydroxy-3-methylbutanoate = 3-methyl-2-oxobutanoate + H2O. It catalyses the reaction (2R,3R)-2,3-dihydroxy-3-methylpentanoate = (S)-3-methyl-2-oxopentanoate + H2O. Its pathway is amino-acid biosynthesis; L-isoleucine biosynthesis; L-isoleucine from 2-oxobutanoate: step 3/4. The protein operates within amino-acid biosynthesis; L-valine biosynthesis; L-valine from pyruvate: step 3/4. Functionally, functions in the biosynthesis of branched-chain amino acids. Catalyzes the dehydration of (2R,3R)-2,3-dihydroxy-3-methylpentanoate (2,3-dihydroxy-3-methylvalerate) into 2-oxo-3-methylpentanoate (2-oxo-3-methylvalerate) and of (2R)-2,3-dihydroxy-3-methylbutanoate (2,3-dihydroxyisovalerate) into 2-oxo-3-methylbutanoate (2-oxoisovalerate), the penultimate precursor to L-isoleucine and L-valine, respectively. The sequence is that of Dihydroxy-acid dehydratase from Buchnera aphidicola subsp. Acyrthosiphon pisum (strain 5A).